The following is a 521-amino-acid chain: Non-specific phospholipase C5 (521 aa).

A compositionally biased stretch (basic and acidic residues) spans S478–D487. A disordered region spans residues S478–N521. Positions S511–N521 are enriched in polar residues.

The protein belongs to the bacterial phospholipase C family. As to expression, specifically expressed in flowers.

The protein resides in the cytoplasm. The protein localises to the cytosol. It carries out the reaction a 1,2-diacyl-sn-glycero-3-phosphocholine + H2O = phosphocholine + a 1,2-diacyl-sn-glycerol + H(+). In terms of biological role, non-specific phospholipase C (PLC) which assumes minor PLC activity during inorganic phosphate starvation. Can hydrolyze both phosphatidylcholine (PC) and phosphatidylethanolamine (PE). Required for normal accumulation of digalactosyldiacylglycerol (DGDG) during phosphate limitation and may contribute to the conversion of phospholipids to diacylglycerol, the substrate for galactolipid synthesis. This is Non-specific phospholipase C5 (NPC5) from Arabidopsis thaliana (Mouse-ear cress).